The sequence spans 265 residues: Zinc import ATP-binding protein ZnuC (265 aa).

Residues 6 to 221 form the ABC transporter domain; it reads IRLEQVAVTL…PAFVELFGKN (216 aa). Position 38–45 (38–45) interacts with ATP; it reads GPNGAGKT. Residues 245–265 form a disordered region; the sequence is DAPATSSHTHTHVHGDHCKHG.

Belongs to the ABC transporter superfamily. Zinc importer (TC 3.A.1.15.5) family. The complex is composed of two ATP-binding proteins (ZnuC), two transmembrane proteins (ZnuB) and a solute-binding protein (ZnuA).

It is found in the cell inner membrane. It carries out the reaction Zn(2+)(out) + ATP(in) + H2O(in) = Zn(2+)(in) + ADP(in) + phosphate(in) + H(+)(in). In terms of biological role, part of the ABC transporter complex ZnuABC involved in zinc import. Responsible for energy coupling to the transport system. The chain is Zinc import ATP-binding protein ZnuC from Pseudomonas savastanoi pv. phaseolicola (strain 1448A / Race 6) (Pseudomonas syringae pv. phaseolicola (strain 1448A / Race 6)).